We begin with the raw amino-acid sequence, 379 residues long: V-type proton ATPase subunit S1 (379 aa).

An N-terminal signal peptide occupies residues 1–17; it reads MLWKSLIALCVIGAAVA. Residues 18 to 333 lie on the Lumenal side of the membrane; the sequence is EQTPVFLWGA…WDCVGFVTPG (316 aa). N225 and N284 each carry an N-linked (GlcNAc...) asparagine glycan. The cysteines at positions 282 and 326 are disulfide-linked. Residues 334-354 form a helical membrane-spanning segment; the sequence is ILMGLFVVALLLVIMFVGVCW. Over 355-379 the chain is Cytoplasmic; that stretch reads MMDINTMDRFDDPKGKTITINAAAE.

Belongs to the vacuolar ATPase subunit S1 family. As to quaternary structure, accessory component of the multisubunit proton-transporting vacuolar (V)-ATPase protein pump. May interact with ATP6AP2.

The protein resides in the endoplasmic reticulum membrane. Accessory subunit of the proton-transporting vacuolar (V)-ATPase protein pump, which is required for luminal acidification of secretory vesicles. This Drosophila melanogaster (Fruit fly) protein is V-type proton ATPase subunit S1.